Consider the following 944-residue polypeptide: Neutral alpha-glucosidase AB (944 aa).

The N-terminal stretch at 1–32 (MAAIAAVAARRRRSWLSLVLAYLGVCLGITLA) is a signal peptide. Cysteines 41 and 47 form a disulfide. Residue serine 52 is modified to Phosphoserine. N-linked (GlcNAc...) asparagine glycosylation is present at asparagine 97. Residues 180 to 238 (HQRAPRVPQESKDPAEGNGAQPEATPGDGDKPEETQEKAEKDEPGAWEETFKTHSDSKP) are disordered. Positions 207–236 (DGDKPEETQEKAEKDEPGAWEETFKTHSDS) are enriched in basic and acidic residues. Residues aspartate 283 and aspartate 429 each contribute to the substrate site. Aspartate 542 serves as the catalytic Nucleophile. Substrate is bound at residue arginine 602. The active-site Proton donor is the aspartate 618. Cysteine 633 and cysteine 644 are joined by a disulfide. Histidine 676 is a binding site for substrate.

Belongs to the glycosyl hydrolase 31 family. As to quaternary structure, heterodimer of a catalytic alpha subunit (GANAB) and a beta subunit (PRKCSH). Binds glycosylated PTPRC.

It is found in the endoplasmic reticulum. It localises to the golgi apparatus. The protein resides in the melanosome. The enzyme catalyses N(4)-(alpha-D-Glc-(1-&gt;3)-alpha-D-Man-(1-&gt;2)-alpha-D-Man-(1-&gt;2)-alpha-D-Man-(1-&gt;3)-[alpha-D-Man-(1-&gt;2)-alpha-D-Man-(1-&gt;3)-[alpha-D-Man-(1-&gt;2)-alpha-D-Man-(1-&gt;6)]-alpha-D-Man-(1-&gt;6)]-beta-D-Man-(1-&gt;4)-beta-D-GlcNAc-(1-&gt;4)-beta-D-GlcNAc)-L-asparaginyl-[protein] + H2O = N(4)-(alpha-D-Man-(1-&gt;2)-alpha-D-Man-(1-&gt;2)-alpha-D-Man-(1-&gt;3)-[alpha-D-Man-(1-&gt;2)-alpha-D-Man-(1-&gt;3)-[alpha-D-Man-(1-&gt;2)-alpha-D-Man-(1-&gt;6)]-alpha-D-Man-(1-&gt;6)]-beta-D-Man-(1-&gt;4)-beta-D-GlcNAc-(1-&gt;4)-beta-D-GlcNAc)-L-asparaginyl-[protein] (N-glucan mannose isomer 9A1,2,3B1,2,3) + beta-D-glucose. It catalyses the reaction N(4)-(alpha-D-Glc-(1-&gt;3)-alpha-D-Glc-(1-&gt;3)-alpha-D-Man-(1-&gt;2)-alpha-D-Man-(1-&gt;2)-alpha-D-Man-(1-&gt;3)-[alpha-D-Man-(1-&gt;2)-alpha-D-Man-(1-&gt;3)-[alpha-D-Man-(1-&gt;2)-alpha-D-Man-(1-&gt;6)]-alpha-D-Man-(1-&gt;6)]-beta-D-Man-(1-&gt;4)-beta-D-GlcNAc-(1-&gt;4)-beta-D-GlcNAc)-L-asparaginyl-[protein] + H2O = N(4)-(alpha-D-Glc-(1-&gt;3)-alpha-D-Man-(1-&gt;2)-alpha-D-Man-(1-&gt;2)-alpha-D-Man-(1-&gt;3)-[alpha-D-Man-(1-&gt;2)-alpha-D-Man-(1-&gt;3)-[alpha-D-Man-(1-&gt;2)-alpha-D-Man-(1-&gt;6)]-alpha-D-Man-(1-&gt;6)]-beta-D-Man-(1-&gt;4)-beta-D-GlcNAc-(1-&gt;4)-beta-D-GlcNAc)-L-asparaginyl-[protein] + beta-D-glucose. The protein operates within glycan metabolism; N-glycan metabolism. In terms of biological role, catalytic subunit of glucosidase II that cleaves sequentially the 2 innermost alpha-1,3-linked glucose residues from the Glc(2)Man(9)GlcNAc(2) oligosaccharide precursor of immature glycoproteins. Required for PKD1/Polycystin-1 and PKD2/Polycystin-2 maturation and localization to the cell surface and cilia. The polypeptide is Neutral alpha-glucosidase AB (Mus musculus (Mouse)).